Reading from the N-terminus, the 159-residue chain is MTRSEKVEIIAKLEEGFKASEAIVVCNYRGLSTKKLEELRNNARENNVKVQIVKNTLANIALNNSGKTGLVLKDTNIYLWGEDQLSVSKVAAKFEENNDKFEIKTAHIEGEVADVAKVKALAKMPSRNELLAMLLQVWNAPITNFTIGLNALKNKKESE.

This sequence belongs to the universal ribosomal protein uL10 family. In terms of assembly, part of the ribosomal stalk of the 50S ribosomal subunit. The N-terminus interacts with L11 and the large rRNA to form the base of the stalk. The C-terminus forms an elongated spine to which L12 dimers bind in a sequential fashion forming a multimeric L10(L12)X complex.

Its function is as follows. Forms part of the ribosomal stalk, playing a central role in the interaction of the ribosome with GTP-bound translation factors. The chain is Large ribosomal subunit protein uL10 (rplJ) from Campylobacter jejuni subsp. jejuni serotype O:2 (strain ATCC 700819 / NCTC 11168).